A 157-amino-acid chain; its full sequence is Transcription elongation factor GreA (157 aa).

Positions 13–75 (RARLEAELEE…EIKSILARAQ (63 aa)) form a coiled coil. Positions 113 to 142 (EAKPSEGKISNESPIGSALLGKRPRQKVTV) are disordered.

This sequence belongs to the GreA/GreB family.

In terms of biological role, necessary for efficient RNA polymerase transcription elongation past template-encoded arresting sites. The arresting sites in DNA have the property of trapping a certain fraction of elongating RNA polymerases that pass through, resulting in locked ternary complexes. Cleavage of the nascent transcript by cleavage factors such as GreA or GreB allows the resumption of elongation from the new 3'terminus. GreA releases sequences of 2 to 3 nucleotides. In Roseiflexus sp. (strain RS-1), this protein is Transcription elongation factor GreA.